The chain runs to 619 residues: Xyloglucan galactosyltransferase MUR3 (619 aa).

Residues 1–26 (MFPRVSMRRRSAEVSPTEPMEKGNGK) form a disordered region. Over 1-33 (MFPRVSMRRRSAEVSPTEPMEKGNGKNQTNRIC) the chain is Cytoplasmic. The chain crosses the membrane as a helical; Signal-anchor for type II membrane protein span at residues 34 to 54 (LLVALSLFFWALLLYFHFVVL). Over 55 to 619 (GTSNIDKQLQ…WKSEQRDKTQ (565 aa)) the chain is Lumenal. N-linked (GlcNAc...) asparagine glycosylation is found at N116, N146, N231, N257, N319, N465, and N482. Residues 576 to 619 (HVWDPFFSKPKPGEDGSSDGNGGTTISADAAKNSWKSEQRDKTQ) form a disordered region. Positions 610–619 (WKSEQRDKTQ) are enriched in basic and acidic residues.

It belongs to the glycosyltransferase 47 family. Interacts with CSLC4 and FUT1. Ubiquitous.

It localises to the golgi apparatus. It is found in the golgi stack membrane. The protein localises to the golgi apparatus membrane. Its function is as follows. Involved in the attachment of the Gal residue on the third xylosyl unit within the XXXG core structure of xyloglucan, the principal glycan that interlaces the cellulose microfibrils in plant cell wall. Associates with other xyloglucan-synthesizing enzymes to form multiprotein complexes for xyloglucan synthesis in the Golgi. Interacts with actin and is required for the proper endomembrane organization and for the cell elongation. Not involved in the trafficking from the endoplasmic reticulum to the vacuoles. Involved in salt stress tolerance. Participates in the control of the expression of genes encoding for proteins involved in reactive oxygen species (ROS) detoxification under salt stress. May contribute to the maintenance of the proper organization of actin microfilaments during salt stress-induced ROS production. This is Xyloglucan galactosyltransferase MUR3 from Arabidopsis thaliana (Mouse-ear cress).